A 455-amino-acid chain; its full sequence is Bifunctional protein GlmU (455 aa).

Positions 1–226 (MALNVVILAA…AIEVEGANNR (226 aa)) are pyrophosphorylase. Residues 8 to 11 (LAAG), lysine 22, glutamine 73, 78 to 79 (GT), 100 to 102 (YGD), glycine 137, glutamate 151, asparagine 166, and asparagine 224 contribute to the UDP-N-acetyl-alpha-D-glucosamine site. Position 102 (aspartate 102) interacts with Mg(2+). Mg(2+) is bound at residue asparagine 224. Positions 227–247 (VQLAQLERAYQARAAEKLMLE) are linker. Positions 248 to 455 (GANLRDPARL…WARPVKKPKS (208 aa)) are N-acetyltransferase. The UDP-N-acetyl-alpha-D-glucosamine site is built by arginine 330 and lysine 348. Histidine 360 (proton acceptor) is an active-site residue. Residues tyrosine 363 and asparagine 374 each coordinate UDP-N-acetyl-alpha-D-glucosamine. Acetyl-CoA is bound by residues alanine 377, 383-384 (NY), serine 402, alanine 420, and arginine 437.

The protein in the N-terminal section; belongs to the N-acetylglucosamine-1-phosphate uridyltransferase family. This sequence in the C-terminal section; belongs to the transferase hexapeptide repeat family. Homotrimer. Mg(2+) is required as a cofactor.

The protein localises to the cytoplasm. It catalyses the reaction alpha-D-glucosamine 1-phosphate + acetyl-CoA = N-acetyl-alpha-D-glucosamine 1-phosphate + CoA + H(+). The catalysed reaction is N-acetyl-alpha-D-glucosamine 1-phosphate + UTP + H(+) = UDP-N-acetyl-alpha-D-glucosamine + diphosphate. It functions in the pathway nucleotide-sugar biosynthesis; UDP-N-acetyl-alpha-D-glucosamine biosynthesis; N-acetyl-alpha-D-glucosamine 1-phosphate from alpha-D-glucosamine 6-phosphate (route II): step 2/2. It participates in nucleotide-sugar biosynthesis; UDP-N-acetyl-alpha-D-glucosamine biosynthesis; UDP-N-acetyl-alpha-D-glucosamine from N-acetyl-alpha-D-glucosamine 1-phosphate: step 1/1. Its pathway is bacterial outer membrane biogenesis; LPS lipid A biosynthesis. Catalyzes the last two sequential reactions in the de novo biosynthetic pathway for UDP-N-acetylglucosamine (UDP-GlcNAc). The C-terminal domain catalyzes the transfer of acetyl group from acetyl coenzyme A to glucosamine-1-phosphate (GlcN-1-P) to produce N-acetylglucosamine-1-phosphate (GlcNAc-1-P), which is converted into UDP-GlcNAc by the transfer of uridine 5-monophosphate (from uridine 5-triphosphate), a reaction catalyzed by the N-terminal domain. This chain is Bifunctional protein GlmU, found in Shewanella sediminis (strain HAW-EB3).